We begin with the raw amino-acid sequence, 335 residues long: Methionine import ATP-binding protein MetN 1 (335 aa).

Residues 2–242 (IEFQNVHKTY…PKHPTTRRFV (241 aa)) enclose the ABC transporter domain. An ATP-binding site is contributed by 38 to 45 (GHSGAGKS).

Belongs to the ABC transporter superfamily. Methionine importer (TC 3.A.1.24) family. In terms of assembly, the complex is composed of two ATP-binding proteins (MetN), two transmembrane proteins (MetI) and a solute-binding protein (MetQ).

Its subcellular location is the cell inner membrane. The enzyme catalyses L-methionine(out) + ATP + H2O = L-methionine(in) + ADP + phosphate + H(+). It carries out the reaction D-methionine(out) + ATP + H2O = D-methionine(in) + ADP + phosphate + H(+). Functionally, part of the ABC transporter complex MetNIQ involved in methionine import. Responsible for energy coupling to the transport system. The chain is Methionine import ATP-binding protein MetN 1 from Pseudomonas fluorescens (strain ATCC BAA-477 / NRRL B-23932 / Pf-5).